The following is a 1491-amino-acid chain: Membrane-associated guanylate kinase, WW and PDZ domain-containing protein 1 (1491 aa).

The 89-residue stretch at 17–105 folds into the PDZ 1 domain; sequence ECTVKRGPQG…AVTFKAVRQG (89 aa). Positions 96–287 constitute a Guanylate kinase-like domain; sequence AVTFKAVRQG…APITDPSQKF (192 aa). Position 103–110 (103–110) interacts with ATP; sequence RQGGRLNK. A disordered region spans residues 236–267; that stretch reads AENEEEDDVPEMNSSFTADSGEQEEHTLQETA. The 34-residue stretch at 300–333 folds into the WW 1 domain; sequence GPLPENWEMAYTENGEVYFIDHNTKTTSWLDPRC. Ser357 carries the phosphoserine modification. The WW 2 domain maps to 359-392; that stretch reads LELPAGWEKIEDPVYGIYYVDHINRKTQYENPVL. Over residues 411-421 the composition is skewed to low complexity; sequence QQQQQQQQQQQ. The tract at residues 411 to 462 is disordered; that stretch reads QQQQQQQQQQQTEEWTEDHSALVPPVIPNHPPSNPEPAREVPLQGKPFFTRN. The span at 435 to 445 shows a compositional bias: pro residues; sequence PVIPNHPPSNP. A PDZ 2 domain is found at 472 to 554; sequence HTKLRKSSRG…GASVDLELCR (83 aa). Residues 586-600 show a composition bias toward polar residues; that stretch reads QETYDSPASHSSKTG. 3 disordered regions span residues 586 to 623, 720 to 832, and 932 to 987; these read QETYDSPASHSSKTGKVNGMKDARPSSPADVASNSSHG, QRGG…FGEC, and TENE…GGGS. The PDZ 3 domain occupies 643–721; the sequence is TVHIVKGPMG…GSEVTLLVQR (79 aa). Residues Ser730 and Ser741 each carry the phosphoserine modification. Over residues 742–752 the composition is skewed to low complexity; sequence QNSSQHSVSSH. A compositionally biased stretch (polar residues) spans 756–766; that stretch reads HTASPSHSTQV. Residue Ser800 is modified to Phosphoserine. A PDZ 4 domain is found at 813–895; sequence SGLSKGERER…DELICVDGTP (83 aa). Residues 939–951 are compositionally biased toward polar residues; sequence PASSHHSSNQPAS. The PDZ 5 domain maps to 970–1066; it reads SSGSGSTSGI…DRILAVNGCS (97 aa). The interaction with FCHSD2 stretch occupies residues 970–1066; it reads SSGSGSTSGI…DRILAVNGCS (97 aa). The span at 975–987 shows a compositional bias: gly residues; the sequence is STSGIGSGGGGGS. Ser1071 carries the post-translational modification Phosphoserine. The segment covering 1112 to 1130 has biased composition (polar residues); it reads TTTHTPSQQGTQETRNTTK. 2 disordered regions span residues 1112-1143 and 1234-1491; these read TTTHTPSQQGTQETRNTTKPKQESQFEFKAPQ and DGSV…DLSI. The PDZ 6 domain occupies 1124-1206; it reads ETRNTTKPKQ…DEILEINGET (83 aa). 3 stretches are compositionally biased toward basic and acidic residues: residues 1278-1338, 1354-1396, and 1403-1491; these read DLHK…DAQA, KRRE…DGSP, and LERL…DLSI. Phosphoserine is present on residues Ser1361 and Ser1412.

In terms of assembly, part of a complex composed of AMOTL2, MAGI1 and CDH5, within the complex AMOTL2 acts as a scaffold protein for the interaction of MAGI1 with CDH5. The complex is required for coupling actin fibers to cell junctions in endothelial cells. Interacts through its WW 2 domain with SYNPO and through its PDZ 5 domain with ACTN4. Interacts with cytoplasmic domain of ADGRB1. Interacts via its WW domains with DRPLA. Interacts with ESAM, LRP2 and CXADR. May interact with CTNNB1. Interacts through its PDZ 1 domain with NET1. Interacts with ASIC3 and AMOT. Interacts with FCHSD2. Interacts with IGSF5/JAM4 and through its PDZ 2 and 3 domains with NPHS1 forming a tripartite complex. Interacts with DDN. Interacts with DLL1. Interacts with KCNJ10 and possibly with KCNJ10/KCNJ16 heterodimer; this interaction may facilitate KCNJ10/KCNJ16 potassium channel expression at the basolateral membrane in kidney tubular cells. Interacts with PRRG4 (via cytoplasmic domain). As to quaternary structure, interacts (via PDZ domain) with RAPGEF2. In terms of tissue distribution, widely expressed with the exception of skeletal muscle. Isoform 1, isoform 2 and isoform 6 are highly expressed in colon, kidney, lung, liver, and pancreas. Isoform 5 is predominantly expressed in brain and heart. Isoform 3 and isoform 4 are highly expressed in pancreas and brain.

It is found in the cell junction. It localises to the tight junction. The protein resides in the cell membrane. Its function is as follows. Plays a role in coupling actin fibers to cell junctions in endothelial cells, via its interaction with AMOTL2 and CDH5. May regulate acid-induced ASIC3 currents by modulating its expression at the cell surface. The protein is Membrane-associated guanylate kinase, WW and PDZ domain-containing protein 1 (MAGI1) of Homo sapiens (Human).